A 422-amino-acid chain; its full sequence is MGKAMLRAGFADTNSSNMNESFARLHFAGGYLPSDSKDWRTIIPSLLMAVCLVGLVGNLCVIGILLHGVWKRKPSTIHSLILNLSLADFSLLLFSAPVRAAAYSKGVWDLGWFICKSSDWFTHVCMAAKSLTFVVVAKACFAYASDPAKQESIHSRTIWSVLAGIWVVASLLPLPEWLFSTTRRHAGVEMCLVDVPAVAEEFMSMFGKLYPLLVFCLPLLLAGVYFWRAYDQCKTRCTKTRNLRDQMRSKQLTVMLLSTAIISALLWLPEWIAWLWVWHVKAGGPMPPQGFIALSQVLMFFTSTANPLIFLVMSEEFKAGLKGLWKWMITRKPAVTSEVQEAPAGNTEALPGKAPSPETQTCILDTDGRGSPDDSKEKSGKVVAPILPDVEQFWHERDAVPSAQDNDPIPWEHEGQETEGCN.

Over 1–45 (MGKAMLRAGFADTNSSNMNESFARLHFAGGYLPSDSKDWRTIIPS) the chain is Extracellular. Residues N14 and N19 are each glycosylated (N-linked (GlcNAc...) asparagine). A helical membrane pass occupies residues 46–66 (LLMAVCLVGLVGNLCVIGILL). Residues 67–76 (HGVWKRKPST) lie on the Cytoplasmic side of the membrane. A helical transmembrane segment spans residues 77–97 (IHSLILNLSLADFSLLLFSAP). At 98-123 (VRAAAYSKGVWDLGWFICKSSDWFTH) the chain is on the extracellular side. Residues C115 and C191 are joined by a disulfide bond. Residues 124–144 (VCMAAKSLTFVVVAKACFAYA) form a helical membrane-spanning segment. Residues 145-157 (SDPAKQESIHSRT) are Cytoplasmic-facing. The helical transmembrane segment at 158–178 (IWSVLAGIWVVASLLPLPEWL) threads the bilayer. Residues 179-205 (FSTTRRHAGVEMCLVDVPAVAEEFMSM) lie on the Extracellular side of the membrane. Residues 206-226 (FGKLYPLLVFCLPLLLAGVYF) traverse the membrane as a helical segment. The Cytoplasmic portion of the chain corresponds to 227–259 (WRAYDQCKTRCTKTRNLRDQMRSKQLTVMLLST). A helical membrane pass occupies residues 260–280 (AIISALLWLPEWIAWLWVWHV). Topologically, residues 281-290 (KAGGPMPPQG) are extracellular. The chain crosses the membrane as a helical span at residues 291-311 (FIALSQVLMFFTSTANPLIFL). At 312–422 (VMSEEFKAGL…HEGQETEGCN (111 aa)) the chain is on the cytoplasmic side. Residues 339–422 (VQEAPAGNTE…HEGQETEGCN (84 aa)) form a disordered region. Basic and acidic residues predominate over residues 366–380 (TDGRGSPDDSKEKSG).

In terms of tissue distribution, high expression in the brain and lower levels in kidney and liver. In the nervous system expressed specifically in the habenular area (at protein level).

The protein localises to the cell membrane. Functionally, proton-sensing G-protein coupled receptor. The sequence is that of G-protein coupled receptor 151 protein (Gpr151) from Mus musculus (Mouse).